We begin with the raw amino-acid sequence, 721 residues long: ATP-dependent zinc metalloprotease FtsH (721 aa).

At 1-44 the chain is on the cytoplasmic side; the sequence is MYFLKKIVNLFSSKIESEDNNVKKDDLTQPRKQSPEARKRRNRR. A helical membrane pass occupies residues 45-65; sequence IIFWLIILLIIGTIIGVIIYF. Over 66–190 the chain is Extracellular; sequence SVRKEYDNVI…AGIPSSGFNP (125 aa). A helical transmembrane segment spans residues 191 to 211; the sequence is QVIISPLISIIFFIIFLYIIL. Residues 212–721 are Cytoplasmic-facing; that stretch reads RVSKAQSDSL…KDKEKDQKSN (510 aa). Residue 279 to 286 coordinates ATP; it reads GPPGTGKT. His-498 contributes to the Zn(2+) binding site. The active site involves Glu-499. Zn(2+) is bound by residues His-502 and Asp-577. The disordered stretch occupies residues 686 to 721; it reads NKREASQKQANSSVEEAKVVDDEESIKDKEKDQKSN. Positions 700 to 721 are enriched in basic and acidic residues; it reads EEAKVVDDEESIKDKEKDQKSN.

The protein in the central section; belongs to the AAA ATPase family. It in the C-terminal section; belongs to the peptidase M41 family. Homohexamer. The cofactor is Zn(2+).

The protein localises to the cell membrane. In terms of biological role, acts as a processive, ATP-dependent zinc metallopeptidase for both cytoplasmic and membrane proteins. Plays a role in the quality control of integral membrane proteins. In Ureaplasma parvum serovar 3 (strain ATCC 27815 / 27 / NCTC 11736), this protein is ATP-dependent zinc metalloprotease FtsH.